Consider the following 346-residue polypeptide: Phosphate acyltransferase (346 aa).

This sequence belongs to the PlsX family. In terms of assembly, homodimer. Probably interacts with PlsY.

It localises to the cytoplasm. It catalyses the reaction a fatty acyl-[ACP] + phosphate = an acyl phosphate + holo-[ACP]. Its pathway is lipid metabolism; phospholipid metabolism. Functionally, catalyzes the reversible formation of acyl-phosphate (acyl-PO(4)) from acyl-[acyl-carrier-protein] (acyl-ACP). This enzyme utilizes acyl-ACP as fatty acyl donor, but not acyl-CoA. The polypeptide is Phosphate acyltransferase (Geotalea daltonii (strain DSM 22248 / JCM 15807 / FRC-32) (Geobacter daltonii)).